The following is a 653-amino-acid chain: Ran-binding protein 9 (653 aa).

Residues 1 to 21 (MSGQPPPPPPQQQPPPPPPPA) are compositionally biased toward pro residues. Residues 1–62 (MSGQPPPPPP…SAAAPFPHGD (62 aa)) form a disordered region. A compositionally biased stretch (low complexity) spans 22 to 57 (SAAAPATAPPGLAVGPGPAAGVPVPGLAAGSSAAAP). The region spanning 72–259 (LQRRLKRLYP…VDANFGQHPF (188 aa)) is the B30.2/SPRY domain. The LisH domain occupies 290-322 (WQTMIQKMVSSYLVHHGYCATAEAFARSTDQTV). Residues 326 to 332 (LASIKNR) are interaction with CALB1. A CTLH domain is found at 328-385 (SIKNRQRIQKLVLAGRMGEAIETTQQLYPSLLERNPNLLFTLKVRQFIEMVNGTDSEV). At Lys330 the chain carries N6-acetyllysine. The disordered stretch occupies residues 386-422 (RCLGGRSPKSQDSYPVSPRPFSSPSMSPSHGMSIHSL). Low complexity predominate over residues 398–421 (SYPVSPRPFSSPSMSPSHGMSIHS). Phosphoserine is present on residues Ser402 and Ser412. The tract at residues 539–653 (AAIERMIHFG…AFATVEDYLH (115 aa)) is interaction with FMR1.

It belongs to the RANBP9/10 family. As to quaternary structure, part of a complex consisting of RANBP9, MKLN1 and GID8. Identified in the CTLH complex that contains GID4, RANBP9 and/or RANBP10, MKLN1, MAEA, RMND5A (or alternatively its paralog RMND5B), GID8, ARMC8, WDR26 and YPEL5. Within this complex, MAEA, RMND5A (or alternatively its paralog RMND5B), GID8, WDR26, and RANBP9 and/or RANBP10 form the catalytic core, while GID4, MKLN1, ARMC8 and YPEL5 have ancillary roles. Interacts with GTP-bound Ran, AR, CDC2L1/p110C, CALB1, S100A7, USP11, SOS1 or SOS2, GID8, and FMR1. Interacts with the Dyrk kinases HIPK2, DYRK1A, and DYRK1B. Interacts with TP73 isoform Alpha but not with TP53. Interacts with the HGF receptor MET and the integrins ITGB1 and ITGB2, but not with ITGAL. Part of a complex consisting of RANBP9, RAN, DYRK1B and COPS5. Directly interacts with RANBP10. Interacts with YPEL5. Interacts with MKLN1. Interacts with DDX4. Interacts with NGFR. Interacts with Tex19.1 and, probably, Tex19.2. Phosphorylated in response to stress. Post-translationally, ubiquitinated. Polyubiquitination targets the protein for rapid degradation via the ubiquitin system. In terms of tissue distribution, ubiquitously expressed, with highest levels in maturating spermatocytes.

It localises to the cytoplasm. The protein resides in the cell membrane. The protein localises to the nucleus. May act as scaffolding protein, and as adapter protein to couple membrane receptors to intracellular signaling pathways. Acts as a mediator of cell spreading and actin cytoskeleton rearrangement. Core component of the CTLH E3 ubiquitin-protein ligase complex that selectively accepts ubiquitin from UBE2H and mediates ubiquitination and subsequent proteasomal degradation of the transcription factor HBP1. May be involved in signaling of ITGB2/LFA-1 and other integrins. Enhances HGF-MET signaling by recruiting Sos and activating the Ras pathway. Enhances dihydrotestosterone-induced transactivation activity of AR, as well as dexamethasone-induced transactivation activity of NR3C1, but not affect estrogen-induced transactivation. Stabilizes TP73 isoform Alpha, probably by inhibiting its ubiquitination, and increases its proapoptotic activity. Inhibits the kinase activity of DYRK1A and DYRK1B. Inhibits FMR1 binding to RNA. The chain is Ran-binding protein 9 from Mus musculus (Mouse).